The following is a 241-amino-acid chain: 1-(5-phosphoribosyl)-5-[(5-phosphoribosylamino)methylideneamino] imidazole-4-carboxamide isomerase (241 aa).

Catalysis depends on Asp-10, which acts as the Proton acceptor. The active-site Proton donor is the Asp-131.

The protein belongs to the HisA/HisF family.

It is found in the cytoplasm. The catalysed reaction is 1-(5-phospho-beta-D-ribosyl)-5-[(5-phospho-beta-D-ribosylamino)methylideneamino]imidazole-4-carboxamide = 5-[(5-phospho-1-deoxy-D-ribulos-1-ylimino)methylamino]-1-(5-phospho-beta-D-ribosyl)imidazole-4-carboxamide. It participates in amino-acid biosynthesis; L-histidine biosynthesis; L-histidine from 5-phospho-alpha-D-ribose 1-diphosphate: step 4/9. The chain is 1-(5-phosphoribosyl)-5-[(5-phosphoribosylamino)methylideneamino] imidazole-4-carboxamide isomerase from Bifidobacterium longum subsp. infantis (strain ATCC 15697 / DSM 20088 / JCM 1222 / NCTC 11817 / S12).